The following is a 195-amino-acid chain: 3-isopropylmalate dehydratase small subunit (195 aa).

The protein belongs to the LeuD family. LeuD type 1 subfamily. In terms of assembly, heterodimer of LeuC and LeuD.

It catalyses the reaction (2R,3S)-3-isopropylmalate = (2S)-2-isopropylmalate. Its pathway is amino-acid biosynthesis; L-leucine biosynthesis; L-leucine from 3-methyl-2-oxobutanoate: step 2/4. In terms of biological role, catalyzes the isomerization between 2-isopropylmalate and 3-isopropylmalate, via the formation of 2-isopropylmaleate. The sequence is that of 3-isopropylmalate dehydratase small subunit from Oenococcus oeni (strain ATCC BAA-331 / PSU-1).